The following is a 767-amino-acid chain: uncharacterized protein (767 aa).

Disordered regions lie at residues Leu171–Pro209, Glu314–Glu340, and Arg533–Phe566. 2 stretches are compositionally biased toward basic and acidic residues: residues Pro322 to Lys331 and Glu552 to Arg564.

This is an uncharacterized protein from Homo sapiens (Human).